We begin with the raw amino-acid sequence, 117 residues long: Large ribosomal subunit protein uL24 (117 aa).

Residues 1–10 are compositionally biased toward basic residues; it reads MSKQPRKQRK. Positions 1–28 are disordered; it reads MSKQPRKQRKALYTAPLHKRHNSMSVHL.

Belongs to the universal ribosomal protein uL24 family. As to quaternary structure, part of the 50S ribosomal subunit.

Functionally, one of two assembly initiator proteins, it binds directly to the 5'-end of the 23S rRNA, where it nucleates assembly of the 50S subunit. In terms of biological role, located at the polypeptide exit tunnel on the outside of the subunit. The polypeptide is Large ribosomal subunit protein uL24 (Methanosphaera stadtmanae (strain ATCC 43021 / DSM 3091 / JCM 11832 / MCB-3)).